A 191-amino-acid chain; its full sequence is Ribonuclease HII (191 aa).

The region spanning 16 to 191 is the RNase H type-2 domain; the sequence is INLIGIDEAG…KLHRKSFKLL (176 aa). Residues D22, E23, and D110 each contribute to the a divalent metal cation site.

Belongs to the RNase HII family. The cofactor is Mn(2+). Mg(2+) serves as cofactor.

The protein localises to the cytoplasm. The enzyme catalyses Endonucleolytic cleavage to 5'-phosphomonoester.. Functionally, endonuclease that specifically degrades the RNA of RNA-DNA hybrids. This Campylobacter jejuni subsp. jejuni serotype O:2 (strain ATCC 700819 / NCTC 11168) protein is Ribonuclease HII (rnhB).